Reading from the N-terminus, the 450-residue chain is D-inositol 3-phosphate glycosyltransferase (450 aa).

Histidine 21 is a 1D-myo-inositol 3-phosphate binding site. UDP-N-acetyl-alpha-D-glucosamine is bound by residues 27–28 (QP) and glycine 35. Residues 32 to 37 (DAGGMN), lysine 90, tyrosine 123, threonine 147, and arginine 167 each bind 1D-myo-inositol 3-phosphate. UDP-N-acetyl-alpha-D-glucosamine contacts are provided by arginine 241, lysine 246, and valine 307. 3 residues coordinate Mg(2+): tyrosine 316, arginine 317, and alanine 319. The UDP-N-acetyl-alpha-D-glucosamine site is built by glutamate 329 and glutamate 337. Threonine 343 lines the Mg(2+) pocket.

The protein belongs to the glycosyltransferase group 1 family. MshA subfamily. Homodimer.

It carries out the reaction 1D-myo-inositol 3-phosphate + UDP-N-acetyl-alpha-D-glucosamine = 1D-myo-inositol 2-acetamido-2-deoxy-alpha-D-glucopyranoside 3-phosphate + UDP + H(+). Catalyzes the transfer of a N-acetyl-glucosamine moiety to 1D-myo-inositol 3-phosphate to produce 1D-myo-inositol 2-acetamido-2-deoxy-glucopyranoside 3-phosphate in the mycothiol biosynthesis pathway. The sequence is that of D-inositol 3-phosphate glycosyltransferase from Geodermatophilus obscurus (strain ATCC 25078 / DSM 43160 / JCM 3152 / CCUG 61914 / KCC A-0152 / KCTC 9177 / NBRC 13315 / NRRL B-3577 / G-20).